Here is a 232-residue protein sequence, read N- to C-terminus: YlmG homolog protein 1-1, chloroplastic (232 aa).

A chloroplast-targeting transit peptide spans 1-16 (MAAITALTLRSPVYLP). A run of 2 helical transmembrane segments spans residues 147-167 (LTVV…VLMV) and 201-221 (IIPP…AVLG).

The protein belongs to the YggT family.

The protein resides in the plastid. Its subcellular location is the chloroplast thylakoid membrane. Its function is as follows. Required for the proper distribution of nucleoids in chloroplasts. The nucleoid partitioning by YLMG1-1 may be related to chloroplast division processes. In Arabidopsis thaliana (Mouse-ear cress), this protein is YlmG homolog protein 1-1, chloroplastic.